Consider the following 309-residue polypeptide: Probable inactive poly [ADP-ribose] polymerase SRO5 (309 aa).

The PARP catalytic domain maps to 28-255; it reads CDSSSDRSFA…AFPVLIKALS (228 aa). The 72-residue stretch at 238 to 309 folds into the RST domain; sequence KRLRSPWMAF…IKACGHKVQH (72 aa).

Interacts with dehydration-responsive DREB2 proteins and a number of transcription factors belonging to several protein families.

It is found in the nucleus matrix. In terms of biological role, probable inactive ADP-ribosyltransferase that may be involved in stress and developmental responses. This is Probable inactive poly [ADP-ribose] polymerase SRO5 (SRO5) from Arabidopsis thaliana (Mouse-ear cress).